Reading from the N-terminus, the 525-residue chain is uncharacterized protein (525 aa).

The segment at residues 21–48 is a DNA-binding region (zn(2)-C6 fungal-type); sequence CLICRSMRKKCDEVHPQCGRCLKAGKQC.

The protein resides in the cytoplasm. It localises to the nucleus. This is an uncharacterized protein from Schizosaccharomyces pombe (strain 972 / ATCC 24843) (Fission yeast).